The following is a 91-amino-acid chain: Small ribosomal subunit protein bS16 (91 aa).

The protein belongs to the bacterial ribosomal protein bS16 family.

This chain is Small ribosomal subunit protein bS16, found in Levilactobacillus brevis (strain ATCC 367 / BCRC 12310 / CIP 105137 / JCM 1170 / LMG 11437 / NCIMB 947 / NCTC 947) (Lactobacillus brevis).